The primary structure comprises 180 residues: Large ribosomal subunit protein uL5 (180 aa).

It belongs to the universal ribosomal protein uL5 family. As to quaternary structure, part of the 50S ribosomal subunit; part of the 5S rRNA/L5/L18/L25 subcomplex. Contacts the 5S rRNA and the P site tRNA. Forms a bridge to the 30S subunit in the 70S ribosome.

This is one of the proteins that bind and probably mediate the attachment of the 5S RNA into the large ribosomal subunit, where it forms part of the central protuberance. In the 70S ribosome it contacts protein S13 of the 30S subunit (bridge B1b), connecting the 2 subunits; this bridge is implicated in subunit movement. Contacts the P site tRNA; the 5S rRNA and some of its associated proteins might help stabilize positioning of ribosome-bound tRNAs. This chain is Large ribosomal subunit protein uL5, found in Synechocystis sp. (strain ATCC 27184 / PCC 6803 / Kazusa).